Here is a 331-residue protein sequence, read N- to C-terminus: MLSFQATVRPLAVSSRLHSPAAHIWRRNAHTAAMSDDSLDQGSSSSYGDSASQPHLGKGKGRQDSLAQSYRFPEKGMNGGPPDPFEVMALDRSATQQEVKQQYYKLALLLHPDSSHPSSSPDHFATLNKAYNLLSKQSSRSAFLKTGYGWDVSTSSGGNQTWSDSLMRAEIARRRNGGAAAWNGASRRYRDSDAGRGAWGGFDGSQGWRPYEDPSKGFSPPTSGPAEERYMSNPRFLAVVGVASAVIAWVHWHRLGYAAETHRDMLDKQNIDASRALAQARYEAATHGHIRREQIRRRVREAEVLKELEKADQGHIAVAGPPTAYPPSHRE.

A mitochondrion-targeting transit peptide spans 1–36; that stretch reads MLSFQATVRPLAVSSRLHSPAAHIWRRNAHTAAMSD. The tract at residues 35 to 66 is disordered; that stretch reads SDDSLDQGSSSSYGDSASQPHLGKGKGRQDSL. Positions 40–53 are enriched in low complexity; the sequence is DQGSSSSYGDSASQ. Residues 83 to 147 form the J domain; the sequence is DPFEVMALDR…SSRSAFLKTG (65 aa). Residues 203 to 226 form a disordered region; the sequence is DGSQGWRPYEDPSKGFSPPTSGPA. In terms of domain architecture, IQ spans 275–303; sequence RALAQARYEAATHGHIRREQIRRRVREAE.

Belongs to the DnaJ family. In terms of assembly, interacts with QCR2.

It is found in the mitochondrion. In terms of biological role, mitochondrial co-chaperone required for ubiquinol-cytochrome c oxidoreductase (mitochondrial respiratory chain complex III) activity. This is Mitochondrial respiration co-chaperone MRJ1 from Cryptococcus neoformans var. grubii serotype A (strain H99 / ATCC 208821 / CBS 10515 / FGSC 9487) (Filobasidiella neoformans var. grubii).